Reading from the N-terminus, the 336-residue chain is Probable assembly chaperone of rpl4 (336 aa).

TPR repeat units lie at residues 39 to 72, 75 to 108, 110 to 143, and 162 to 195; these read GRAF…SKNL, DQGY…LERL, IDKG…QPDA, and AEAL…ISRA. A disordered region spans residues 316 to 336; sequence DEENEEAEWETSENEEEMDED.

This sequence belongs to the ACL4 family.

The protein resides in the cytoplasm. It localises to the nucleus. It is found in the nucleolus. In terms of biological role, acts as a chaperone for the L4 ribosomal subunit encoded by rpl4A and rpl4B, required for hierarchical ribosome assembly. Shields ribosomal protein L4 until timely release and insertion into the pre-ribosome is possible, once ribosomal protein L18 is present. The chain is Probable assembly chaperone of rpl4 from Schizosaccharomyces pombe (strain 972 / ATCC 24843) (Fission yeast).